Consider the following 550-residue polypeptide: Hydroxylamine reductase (550 aa).

Cys3, Cys6, Cys18, and Cys25 together coordinate [2Fe-2S] cluster. Residues His249, Glu273, Cys317, Cys405, Cys433, Cys458, Glu492, and Lys494 each contribute to the hybrid [4Fe-2O-2S] cluster site. Residue Cys405 is modified to Cysteine persulfide.

The protein belongs to the HCP family. The cofactor is [2Fe-2S] cluster. Requires hybrid [4Fe-2O-2S] cluster as cofactor.

The protein localises to the cytoplasm. The catalysed reaction is A + NH4(+) + H2O = hydroxylamine + AH2 + H(+). In terms of biological role, catalyzes the reduction of hydroxylamine to form NH(3) and H(2)O. In Salmonella gallinarum (strain 287/91 / NCTC 13346), this protein is Hydroxylamine reductase.